The primary structure comprises 180 residues: Large ribosomal subunit protein uL6 (180 aa).

The segment at 158–180 is disordered; sequence YSGKGISYKGEKIRRKEGKTASK.

The protein belongs to the universal ribosomal protein uL6 family. Part of the 50S ribosomal subunit.

In terms of biological role, this protein binds to the 23S rRNA, and is important in its secondary structure. It is located near the subunit interface in the base of the L7/L12 stalk, and near the tRNA binding site of the peptidyltransferase center. In Mycoplasmopsis synoviae (strain 53) (Mycoplasma synoviae), this protein is Large ribosomal subunit protein uL6.